An 894-amino-acid polypeptide reads, in one-letter code: Translation factor GUF1 homolog, mitochondrial (894 aa).

The segment at 157 to 189 (EDEGLDGGPPPGMEAKKSSSSSSSNNVHSNCSD) is disordered. Positions 174–188 (SSSSSSSNNVHSNCS) are enriched in low complexity. The region spanning 199-376 (ENIRNFCILA…RIVSEIPSPA (178 aa)) is the tr-type G domain. GTP contacts are provided by residues 208–215 (AHIDSGKS), 269–273 (DTPGH), and 323–326 (NKID). The interval 649–674 (DHDDCNDNGGSNSDDRSDRSGKNPPD) is disordered.

This sequence belongs to the TRAFAC class translation factor GTPase superfamily. Classic translation factor GTPase family. LepA subfamily.

The protein resides in the mitochondrion inner membrane. The catalysed reaction is GTP + H2O = GDP + phosphate + H(+). Its function is as follows. Promotes mitochondrial protein synthesis. May act as a fidelity factor of the translation reaction, by catalyzing a one-codon backward translocation of tRNAs on improperly translocated ribosomes. Binds to mitochondrial ribosomes in a GTP-dependent manner. The chain is Translation factor GUF1 homolog, mitochondrial from Plasmodium knowlesi (strain H).